Here is a 123-residue protein sequence, read N- to C-terminus: Large ribosomal subunit protein uL29y (123 aa).

It belongs to the universal ribosomal protein uL29 family.

This Arabidopsis thaliana (Mouse-ear cress) protein is Large ribosomal subunit protein uL29y (RPL35B).